The chain runs to 249 residues: MADS-box transcription factor 17 (249 aa).

Residues 1 to 61 (MGRGRVELKR…GKLYEFGSAG (61 aa)) form the MADS-box domain. One can recognise a K-box domain in the interval 88–178 (HQSWYQEMSR…KNKLEAEADS (91 aa)). The interval 228–249 (ANPRSNGGGGDQNNNFVMGWPL) is disordered.

As to quaternary structure, may interact with the K-box of MADS6. In terms of tissue distribution, expressed in the floral meristem, lodicule, palea, lemma, receptacle, empty glume, stamen, pistil, and ovule.

It localises to the nucleus. In terms of biological role, probable transcription factor. Plays minor but redundant roles with MADS6 in floral development. The protein is MADS-box transcription factor 17 (MADS17) of Oryza sativa subsp. japonica (Rice).